The sequence spans 415 residues: 26S proteasome regulatory subunit 6B (415 aa).

203–210 (GPPGCGKT) lines the ATP pocket.

Belongs to the AAA ATPase family.

The protein resides in the cytoplasm. Its subcellular location is the nucleus. In terms of biological role, the 26S proteasome is involved in the ATP-dependent degradation of ubiquitinated proteins. The regulatory (or ATPase) complex confers ATP dependency and substrate specificity to the 26S complex. The protein is 26S proteasome regulatory subunit 6B of Manduca sexta (Tobacco hawkmoth).